We begin with the raw amino-acid sequence, 150 residues long: Endoribonuclease YbeY (150 aa).

Zn(2+) is bound by residues histidine 112, histidine 116, and histidine 122.

This sequence belongs to the endoribonuclease YbeY family. Requires Zn(2+) as cofactor.

Its subcellular location is the cytoplasm. Functionally, single strand-specific metallo-endoribonuclease involved in late-stage 70S ribosome quality control and in maturation of the 3' terminus of the 16S rRNA. This Geobacter metallireducens (strain ATCC 53774 / DSM 7210 / GS-15) protein is Endoribonuclease YbeY.